We begin with the raw amino-acid sequence, 42 residues long: Protein YkgS (42 aa).

This chain is Protein YkgS (ykgS), found in Escherichia coli (strain K12).